Here is a 1077-residue protein sequence, read N- to C-terminus: Carbamoyl phosphate synthase large chain (1077 aa).

The segment at 2–403 (PKRTDIKSIL…SLQKALRGLE (402 aa)) is carboxyphosphate synthetic domain. Positions 129, 169, 175, 176, 208, 210, 215, 241, 242, 243, 285, and 299 each coordinate ATP. In terms of domain architecture, ATP-grasp 1 spans 133 to 328 (DIAMKKIGLD…IAKIAAKLAV (196 aa)). Glutamine 285, glutamate 299, and asparagine 301 together coordinate Mg(2+). Mn(2+) contacts are provided by glutamine 285, glutamate 299, and asparagine 301. The segment at 404-553 (VGATGFDPKV…YSTYEEECES (150 aa)) is oligomerization domain. The segment at 554–936 (NPTSDRPKVM…AFSKAMLGSQ (383 aa)) is carbamoyl phosphate synthetic domain. The region spanning 679-870 (QQAVNRLGLK…LAKIAARVMV (192 aa)) is the ATP-grasp 2 domain. 10 residues coordinate ATP: arginine 715, arginine 754, leucine 756, glutamate 761, glycine 786, valine 787, histidine 788, serine 789, glutamine 829, and glutamate 841. Residues glutamine 829, glutamate 841, and asparagine 843 each coordinate Mg(2+). 3 residues coordinate Mn(2+): glutamine 829, glutamate 841, and asparagine 843. The MGS-like domain occupies 937-1077 (SGMKKSGRAL…MHAKIKNMKA (141 aa)). The tract at residues 937–1077 (SGMKKSGRAL…MHAKIKNMKA (141 aa)) is allosteric domain.

It belongs to the CarB family. Composed of two chains; the small (or glutamine) chain promotes the hydrolysis of glutamine to ammonia, which is used by the large (or ammonia) chain to synthesize carbamoyl phosphate. Tetramer of heterodimers (alpha,beta)4. Mg(2+) serves as cofactor. Mn(2+) is required as a cofactor.

It carries out the reaction hydrogencarbonate + L-glutamine + 2 ATP + H2O = carbamoyl phosphate + L-glutamate + 2 ADP + phosphate + 2 H(+). It catalyses the reaction hydrogencarbonate + NH4(+) + 2 ATP = carbamoyl phosphate + 2 ADP + phosphate + 2 H(+). Its pathway is amino-acid biosynthesis; L-arginine biosynthesis; carbamoyl phosphate from bicarbonate: step 1/1. It functions in the pathway pyrimidine metabolism; UMP biosynthesis via de novo pathway; (S)-dihydroorotate from bicarbonate: step 1/3. Large subunit of the glutamine-dependent carbamoyl phosphate synthetase (CPSase). CPSase catalyzes the formation of carbamoyl phosphate from the ammonia moiety of glutamine, carbonate, and phosphate donated by ATP, constituting the first step of 2 biosynthetic pathways, one leading to arginine and/or urea and the other to pyrimidine nucleotides. The large subunit (synthetase) binds the substrates ammonia (free or transferred from glutamine from the small subunit), hydrogencarbonate and ATP and carries out an ATP-coupled ligase reaction, activating hydrogencarbonate by forming carboxy phosphate which reacts with ammonia to form carbamoyl phosphate. The sequence is that of Carbamoyl phosphate synthase large chain from Yersinia pestis.